The following is a 315-amino-acid chain: tRNA wybutosine-synthesizing protein 5 (315 aa).

In terms of domain architecture, JmjC spans 102 to 267 (DEKYYLRSLG…YDKTDTYGNK (166 aa)). Position 106 (Y106) interacts with 2-oxoglutarate. Residues H160 and D162 each coordinate Fe cation. 2-oxoglutarate-binding residues include N166 and K175. H235 is a binding site for Fe cation.

It belongs to the TYW5 family. As to quaternary structure, homodimer. The cofactor is Fe(2+).

It carries out the reaction 7-[(3S)-3-amino-3-carboxypropyl]wyosine(37) in tRNA(Phe) + 2-oxoglutarate + O2 = 7-(2-hydroxy-3-amino-3-carboxypropyl)wyosine(37) in tRNA(Phe) + succinate + CO2. The protein operates within tRNA modification; wybutosine-tRNA(Phe) biosynthesis. Functionally, tRNA hydroxylase that acts as a component of the wybutosine biosynthesis pathway. Wybutosine is a hyper modified guanosine with a tricyclic base found at the 3'-position adjacent to the anticodon of eukaryotic phenylalanine tRNA. Catalyzes the hydroxylation of 7-(a-amino-a-carboxypropyl)wyosine (yW-72) into undermodified hydroxywybutosine (OHyW*). OHyW* being further transformed into hydroxywybutosine (OHyW) by LCMT2/TYW4. OHyW is a derivative of wybutosine found in higher eukaryotes. This Homo sapiens (Human) protein is tRNA wybutosine-synthesizing protein 5 (TYW5).